The sequence spans 308 residues: Acetyl-coenzyme A carboxylase carboxyl transferase subunit beta (308 aa).

The region spanning 46-308 is the CoA carboxyltransferase N-terminal domain; the sequence is LWVKCPDTGE…LMMGRGLKAA (263 aa).

Belongs to the AccD/PCCB family. Acetyl-CoA carboxylase is a heterohexamer composed of biotin carboxyl carrier protein (AccB), biotin carboxylase (AccC) and two subunits each of ACCase subunit alpha (AccA) and ACCase subunit beta (AccD).

Its subcellular location is the cytoplasm. It catalyses the reaction N(6)-carboxybiotinyl-L-lysyl-[protein] + acetyl-CoA = N(6)-biotinyl-L-lysyl-[protein] + malonyl-CoA. It participates in lipid metabolism; malonyl-CoA biosynthesis; malonyl-CoA from acetyl-CoA: step 1/1. Its function is as follows. Component of the acetyl coenzyme A carboxylase (ACC) complex. Biotin carboxylase (BC) catalyzes the carboxylation of biotin on its carrier protein (BCCP) and then the CO(2) group is transferred by the transcarboxylase to acetyl-CoA to form malonyl-CoA. This is Acetyl-coenzyme A carboxylase carboxyl transferase subunit beta from Caulobacter sp. (strain K31).